A 297-amino-acid chain; its full sequence is rRNA 2'-O-methyltransferase fibrillarin (297 aa).

A disordered region spans residues methionine 1 to glycine 56. Asymmetric dimethylarginine occurs at positions 2, 7, 12, 16, 19, 24, 28, 32, 36, 40, 44, 48, and 52. Residues threonine 149–threonine 150, glutamate 168–phenylalanine 169, aspartate 192–alanine 193, and aspartate 212–glutamine 215 contribute to the S-adenosyl-L-methionine site.

The protein belongs to the methyltransferase superfamily. Fibrillarin family. In terms of assembly, component of box C/D small nucleolar ribonucleoprotein (snoRNP) particles. It is associated with the U3, U8 and U13 small nuclear RNAs. By homology to other fibrillarins, some or all of the N-terminal domain arginines are modified to asymmetric dimethylarginine (DMA).

It localises to the nucleus. The protein resides in the nucleolus. The catalysed reaction is L-glutaminyl-[histone H2A] + S-adenosyl-L-methionine = N(5)-methyl-L-glutaminyl-[histone H2A] + S-adenosyl-L-homocysteine + H(+). Functionally, S-adenosyl-L-methionine-dependent methyltransferase that has the ability to methylate both RNAs and proteins. Involved in pre-rRNA processing. Utilizes the methyl donor S-adenosyl-L-methionine to catalyze the site-specific 2'-hydroxyl methylation of ribose moieties in pre-ribosomal RNA. Site specificity is provided by a guide RNA that base pairs with the substrate. Methylation occurs at a characteristic distance from the sequence involved in base pairing with the guide RNA. Also acts as a protein methyltransferase by mediating methylation of 'Gln-105' of histone H2A (H2AQ105me), a modification that impairs binding of the FACT complex and is specifically present at 35S ribosomal DNA locus. In Leishmania major, this protein is rRNA 2'-O-methyltransferase fibrillarin.